Reading from the N-terminus, the 432-residue chain is Enolase (432 aa).

A (2R)-2-phosphoglycerate-binding site is contributed by glutamine 163. Glutamate 205 (proton donor) is an active-site residue. Mg(2+) is bound by residues aspartate 242, glutamate 287, and aspartate 314. (2R)-2-phosphoglycerate contacts are provided by lysine 339, arginine 368, serine 369, and lysine 390. Lysine 339 acts as the Proton acceptor in catalysis.

This sequence belongs to the enolase family. The cofactor is Mg(2+).

It is found in the cytoplasm. It localises to the secreted. The protein localises to the cell surface. The catalysed reaction is (2R)-2-phosphoglycerate = phosphoenolpyruvate + H2O. It functions in the pathway carbohydrate degradation; glycolysis; pyruvate from D-glyceraldehyde 3-phosphate: step 4/5. In terms of biological role, catalyzes the reversible conversion of 2-phosphoglycerate (2-PG) into phosphoenolpyruvate (PEP). It is essential for the degradation of carbohydrates via glycolysis. The sequence is that of Enolase from Myxococcus xanthus (strain DK1622).